A 681-amino-acid polypeptide reads, in one-letter code: MAPLHFTILILFSFVIVVSSSSFTPPRHPFDPLTETELKLVRTIINKSYPVGPNHKFTFQYVGLNEPNKSLVLSWYSSPNHTIKPPPRQAFVIARDNGKTREIVLDFSSRAIVSDKIHVGNGYPMLSNDEQEASTELVVKFKPFIDSVAKRGLNVSEIVFTTSTIGWYGETKAEAERVIRLMPFYLDGTVNMYLRPIEGMTIIVNLDEMKVSEFKDRSVVTMPIANGTEYRISKLNPPFGPTLHNAVLLQPDGPGFKVDGHIVRWANWEFHISFDVRAGIVISLASLFDTDVNKYRQVLYKGHLSEMFIPYMDPSDDWYFITYLDCGDFGCGQCAVSLQPYTDCPAGAVFMDGIFAGQDGTPAKIPKVMCIFEKYAGDIMWRHTEAEIPNLEITEVRPDVSLVARIVTTVGNYDYIVDYEFKPSGSIKMGVGLTGVLEVKPVEYIHTSEIKLGEDIHGTIVADNTVGVNHDHFVTFRLHLDIDGTENSFVRNELVTTRSPKSVNTPRKTYWTTKPKTAKTEAEARVKLGLKAEELVVVNPNRKTKHGNEVGYRLLHGSAAGPLLAQDDFPQIRAAFTNYNVWITPYNRSEVWAGGLYADRSQGDDTLAVWSQRNRKIEKEDIVMWYTVGFHHVPSQEDYPTMPTLSGGFELRPTNFFERNPVLKTKPVKVTTARKCTPKND.

Position 323 to 334 (323 to 334 (YLDCGDFGCGQC)) interacts with substrate. The active-site Proton acceptor is the Asp325. The cysteines at positions 344 and 370 are disulfide-linked. A substrate-binding site is contributed by 410 to 415 (VGNYDY). Tyr413 serves as the catalytic Schiff-base intermediate with substrate; via topaquinone. Tyr413 bears the 2',4',5'-topaquinone mark. The Cu cation site is built by His470 and His472. The Mn(2+) site is built by Asp481, Asp621, and Ile622. His632 is a Cu cation binding site.

The protein belongs to the copper/topaquinone oxidase family. Topaquinone (TPQ) is generated by copper-dependent autoxidation of a specific tyrosyl residue. Mostly expressed in stems, and, at lower levels, in flowers and leaves. Mainly detectable in stipules, hypocotyls and roots.

The protein localises to the peroxisome. The enzyme catalyses a primary methyl amine + O2 + H2O = an aldehyde + H2O2 + NH4(+). Its pathway is amine and polyamine degradation; putrescine degradation. In terms of biological role, copper amine oxidase that can use putrescine and spermidine as substrates. Involved in putrescine catabolism in peroxisomes. The protein is Amine oxidase [copper-containing] alpha 3, peroxisomal of Arabidopsis thaliana (Mouse-ear cress).